A 236-amino-acid chain; its full sequence is Ribosome assembly factor MRT4 (236 aa).

This sequence belongs to the universal ribosomal protein uL10 family. Associates with the pre-60S ribosomal particle.

Its subcellular location is the nucleus. It localises to the nucleolus. The protein localises to the cytoplasm. Component of the ribosome assembly machinery. Nuclear paralog of the ribosomal protein P0, it binds pre-60S subunits at an early stage of assembly in the nucleolus, and is replaced by P0 in cytoplasmic pre-60S subunits and mature 80S ribosomes. This chain is Ribosome assembly factor MRT4, found in Saccharomyces cerevisiae (strain ATCC 204508 / S288c) (Baker's yeast).